The primary structure comprises 216 residues: MOB kinase activator-like 1 homolog B (216 aa).

Cys79, Cys84, His161, and His166 together coordinate Zn(2+).

It belongs to the MOB1/phocein family.

This chain is MOB kinase activator-like 1 homolog B (mobB), found in Dictyostelium discoideum (Social amoeba).